A 481-amino-acid polypeptide reads, in one-letter code: Protein hedgehog (481 aa).

The N-palmitoyl cysteine moiety is linked to residue cysteine 93. Residues glutamate 157, glutamate 158, aspartate 163, threonine 193, glutamate 194, aspartate 197, and aspartate 199 each coordinate Ca(2+). Glycine 265 carries the Cholesterol glycine ester lipid modification.

This sequence belongs to the hedgehog family. In terms of assembly, interacts with shf. Post-translationally, the C-terminal part of the hedgehog protein precursor displays an autoproteolysis activity that results in the cleavage of the full-length protein into two parts (N-product and C-product). In addition, the C-terminal part displays a cholesterol transferase activity that results by the covalent attachment of a cholesterol moiety to the C-terminal of the newly generated N-product. The N-product is the active species in both local and long-range signaling, whereas the C-product has no signaling activity. Cholesterylation is required for N-product targeting to lipid rafts and multimerization. In terms of processing, N-palmitoylation by Rasp of the hedgehog N-product, within the secretory pathway, is required for the embryonic and larval patterning activities of the hedgehog signal.

It localises to the nucleus. The protein localises to the cytoplasm. Its subcellular location is the cell membrane. The enzyme catalyses glycyl-L-cysteinyl-[protein] + cholesterol + H(+) = [protein]-C-terminal glycyl cholesterol ester + N-terminal L-cysteinyl-[protein]. The C-terminal part of the hedgehog protein precursor displays an autoproteolysis activity that results in the cleavage of the full-length protein into two parts (N-product and C-product). In addition, the C-terminal part displays a cholesterol transferase activity that results by the covalent attachment of a cholesterol moiety to the C-terminal of the newly generated N-product. Once cleaved, the C-product has no signaling activity and diffuses from the cell. Its function is as follows. The dually lipidated hedgehog protein N-product is a morphogen which is essential for a variety of patterning events during development. Establishes the anterior-posterior axis of the embryonic segments and patterns the larval imaginal disks. Binds to the patched (ptc) receptor, which functions in association with smoothened (smo), to activate the transcription of target genes wingless (wg), decapentaplegic (dpp) and ptc. In the absence of hh, ptc represses the constitutive signaling activity of smo through fused (fu). Essential component of a signaling pathway which regulates the Duox-dependent gut immune response to bacterial uracil; required to activate Cad99C-dependent endosome formation, norpA-dependent Ca2+ mobilization and p38 MAPK, which are essential steps in the Duox-dependent production of reactive oxygen species (ROS) in response to intestinal bacterial infection. During photoreceptor differentiation, it up-regulates transcription of Ubr3, which in turn promotes the hh-signaling pathway by mediating the ubiquitination and degradation of cos. In Drosophila pseudoobscura pseudoobscura (Fruit fly), this protein is Protein hedgehog (hh-1).